The following is a 619-amino-acid chain: MSQETDNKRLVVLVPNDAVFNPRRAYTSEDEAWKSYLENPLTAATKAMMSINGDEESAAAIGLLYDYYKVPREKRLLSLNKINEGHEDQDKRNCLPANETPSNLSTGENRVQVLKTVPVNLSLNNDTVESSNREKYTTSLSESPQPAPASAVTVVKAEEFTPVFMAPSVPYRSDGEEPRGVIFEQTHFGVHSITTHSDYLKDDQRSTPDSTYNESFKETTEKYRTPSVGTEEFLYEQTASSTFQYTLEATKSLRQKQGEGPMTYLNKGQFYAITLSETGANKCFRHPISKVRSVIMVVFSEDKNRDEQLKYWKYWHSRQHTAKQRVLDIADYKESFNTIGNIEEIAYNAVSFTWDVNEEAKIFITVNCLSTDFSSQKGVKGLPLMIQIDTYSYNNRSNKPIHRAYCQIKVFCDKGAERKIRDEERKQNRKKGKSQAAQAQCNNSADGKLSAVPLQKKSDITFFKTMTDLDVQPVLFIPDVHFGNLQRTGQVFYNTDDDIEGGVLVKRLLRPVDEDYGPPAPKQMKEGSRKVLLYVRKETDEVFDALMLKYPTVKGLLEAISEKYGIPVEKIVKIYKKSKKGILVNMDDNIIEHYSNEDTFILNVESLAEQGYKITLTEI.

Residues 1 to 90 (MSQETDNKRL…KINEGHEDQD (90 aa)) are transcription activation. 3 disordered regions span residues 86–108 (HEDQ…STGE), 125–147 (NDTV…PQPA), and 423–444 (EERK…CNNS). Positions 99 to 108 (ETPSNLSTGE) are enriched in polar residues. The 239-residue stretch at 239 to 477 (ASSTFQYTLE…DLDVQPVLFI (239 aa)) folds into the Grh/CP2 DB domain.

It belongs to the grh/CP2 family. Grainyhead subfamily.

The protein resides in the nucleus. Its subcellular location is the membrane. Its function is as follows. Transcription factor playing an important role in primary neurulation and in epithelial development. Binds directly to the consensus DNA sequence 5'-AACCGGTT-3' acting as an activator and repressor on distinct target genes. The chain is Grainyhead-like protein 2 homolog (grhl2) from Xenopus tropicalis (Western clawed frog).